Consider the following 332-residue polypeptide: MTEYDMVVIGGGPVGLYATFYAGLRDMKALLIDAQDELGGQLVTLYPEKMVYDVGGFPGILAYELAQQLVEQAKMFSPDIRIKEWADMIERTQDNMWVVKTDKGNSFKTKTILIAAGIGKMTPSRLGAKGEVEYENKGVYYTVRRKKDFEGKRVLIVGGGDSAVDWALTLAPVAKSVTLIHRRDQFRAHERSVKQLYQVATVYTWHELKEVRGDGNRVTQAVIFDNRTKDEKILDVDAVIISIGFKGDLGNMPKWGVNMKGRDIIVNAKMETNLPGVYAAGDIASQEGAPKLALIAVGFGQAAIAVSVAKKYIDPNASLFAGHSSEMDKFKK.

7 residues coordinate FAD: D33, Q41, Y46, A86, M121, D282, and S325.

It belongs to the ferredoxin--NADP reductase type 2 family. Homodimer. The cofactor is FAD.

The catalysed reaction is 2 reduced [2Fe-2S]-[ferredoxin] + NADP(+) + H(+) = 2 oxidized [2Fe-2S]-[ferredoxin] + NADPH. The polypeptide is Ferredoxin--NADP reductase (Sulfurisphaera tokodaii (strain DSM 16993 / JCM 10545 / NBRC 100140 / 7) (Sulfolobus tokodaii)).